The primary structure comprises 293 residues: Homoserine kinase (293 aa).

P84–A94 provides a ligand contact to ATP.

This sequence belongs to the GHMP kinase family. Homoserine kinase subfamily.

The protein localises to the cytoplasm. The enzyme catalyses L-homoserine + ATP = O-phospho-L-homoserine + ADP + H(+). It participates in amino-acid biosynthesis; L-threonine biosynthesis; L-threonine from L-aspartate: step 4/5. Functionally, catalyzes the ATP-dependent phosphorylation of L-homoserine to L-homoserine phosphate. This is Homoserine kinase from Nautilia profundicola (strain ATCC BAA-1463 / DSM 18972 / AmH).